A 310-amino-acid chain; its full sequence is N-acetyl-gamma-glutamyl-phosphate reductase (310 aa).

The active site involves Cys-117.

This sequence belongs to the NAGSA dehydrogenase family. Type 2 subfamily.

The protein localises to the cytoplasm. It catalyses the reaction N-acetyl-L-glutamate 5-semialdehyde + phosphate + NADP(+) = N-acetyl-L-glutamyl 5-phosphate + NADPH + H(+). Its pathway is amino-acid biosynthesis; L-arginine biosynthesis; N(2)-acetyl-L-ornithine from L-glutamate: step 3/4. In terms of biological role, catalyzes the NADPH-dependent reduction of N-acetyl-5-glutamyl phosphate to yield N-acetyl-L-glutamate 5-semialdehyde. The polypeptide is N-acetyl-gamma-glutamyl-phosphate reductase (Sinorhizobium medicae (strain WSM419) (Ensifer medicae)).